The sequence spans 251 residues: Protection of telomeres homolog 2 (251 aa).

The segment at Glu221 to Gln251 is disordered.

The protein belongs to the telombin family.

It is found in the nucleus. It localises to the chromosome. Its subcellular location is the telomere. Its function is as follows. Telomeric DNA-binding protein, which binds to two or more single-stranded G-rich repeat sequences (G-strand), with high specificity to the 5'-TTAGGC-3' sequence. In addition, repeat sequence binding requires a 3' single-stranded telomeric overhang. Acts redundantly with pot-1 to negatively regulate telomerase-mediated telomere extension. Also regulates telomere length by the telomerase-independent telomere maintenance pathway called ALT (alternative lengthening of telomeres). Does not appear to have a role in anchoring telomeres to the nuclear envelope. This Caenorhabditis elegans protein is Protection of telomeres homolog 2.